Consider the following 57-residue polypeptide: uncharacterized protein (57 aa).

Residues 1-57 form a disordered region; that stretch reads MPHYVVVKSPMRRRRSPRRRSPRVCYSPRRVACSPRRRSPRRRSPRRRSPRRSIVVY. Positions 10–22 are enriched in basic residues; the sequence is PMRRRRSPRRRSP. The segment covering 23–34 has biased composition (low complexity); it reads RVCYSPRRVACS. Residues 35–51 are compositionally biased toward basic residues; the sequence is PRRRSPRRRSPRRRSPR.

This is an uncharacterized protein from Acheta domesticus (House cricket).